We begin with the raw amino-acid sequence, 181 residues long: MGDPKKSRKKWESPGHPWIKERIGYEQELLGKYGLRNKREIWIAQSIIRKFRHQARSLLALPPAERAVREKQLVGKLLKMGLLKRETATVDDILSLTEQDLLERRLQTIVYKKGLANTTYQARQLIIHGHIAVNGKRVTSPGYIVNVDEENLIDYYVTSSFKSRPPVMAQQEGGEAGVKQA.

The S4 RNA-binding domain occupies 104–166 (RRLQTIVYKK…VTSSFKSRPP (63 aa)).

The protein belongs to the universal ribosomal protein uS4 family. As to quaternary structure, part of the 30S ribosomal subunit. Contacts protein S5. The interaction surface between S4 and S5 is involved in control of translational fidelity.

One of the primary rRNA binding proteins, it binds directly to 16S rRNA where it nucleates assembly of the body of the 30S subunit. Functionally, with S5 and S12 plays an important role in translational accuracy. The protein is Small ribosomal subunit protein uS4 of Saccharolobus islandicus (strain Y.N.15.51 / Yellowstone #2) (Sulfolobus islandicus).